The sequence spans 301 residues: ATP synthase gamma chain (301 aa).

This sequence belongs to the ATPase gamma chain family. In terms of assembly, F-type ATPases have 2 components, CF(1) - the catalytic core - and CF(0) - the membrane proton channel. CF(1) has five subunits: alpha(3), beta(3), gamma(1), delta(1), epsilon(1). CF(0) has three main subunits: a, b and c.

It localises to the cell inner membrane. Produces ATP from ADP in the presence of a proton gradient across the membrane. The gamma chain is believed to be important in regulating ATPase activity and the flow of protons through the CF(0) complex. The polypeptide is ATP synthase gamma chain (Helicobacter pylori (strain P12)).